Consider the following 501-residue polypeptide: Glutathione gamma-glutamylcysteinyltransferase 1 (501 aa).

In terms of domain architecture, Peptidase C83 spans 1–221; the sequence is MAMAGLYRRL…GFMLISRPHR (221 aa). Catalysis depends on residues C56, H162, and D180.

The protein belongs to the phytochelatin synthase family. In terms of tissue distribution, expressed in roots, nodules and leaves.

It carries out the reaction [Glu(-Cys)](n)-Gly + glutathione + H(+) = [Glu(-Cys)](n+1)-Gly + glycine. Requires cadmium for activity. Also activated in vitro by Zn(2+), Cu(2+), Fe(2+) or Fe(3+) ions, but not by Co(2+) or Ni(2+) ions. Its function is as follows. Involved in the synthesis of phytochelatins (PC) and homophytochelatins (hPC), the heavy-metal-binding peptides of plants. This is Glutathione gamma-glutamylcysteinyltransferase 1 (PCS1) from Lotus japonicus (Lotus corniculatus var. japonicus).